Here is a 316-residue protein sequence, read N- to C-terminus: Ribose-phosphate pyrophosphokinase (316 aa).

ATP-binding positions include 41 to 43 (DGE) and 100 to 101 (RQ). Residues His-134 and Asp-174 each contribute to the Mg(2+) site. Residue Lys-197 is part of the active site. Residues Arg-199, Asp-223, and 227–231 (DTAGT) each bind D-ribose 5-phosphate.

It belongs to the ribose-phosphate pyrophosphokinase family. Class I subfamily. In terms of assembly, homohexamer. The cofactor is Mg(2+).

It localises to the cytoplasm. The enzyme catalyses D-ribose 5-phosphate + ATP = 5-phospho-alpha-D-ribose 1-diphosphate + AMP + H(+). The protein operates within metabolic intermediate biosynthesis; 5-phospho-alpha-D-ribose 1-diphosphate biosynthesis; 5-phospho-alpha-D-ribose 1-diphosphate from D-ribose 5-phosphate (route I): step 1/1. Its function is as follows. Involved in the biosynthesis of the central metabolite phospho-alpha-D-ribosyl-1-pyrophosphate (PRPP) via the transfer of pyrophosphoryl group from ATP to 1-hydroxyl of ribose-5-phosphate (Rib-5-P). The sequence is that of Ribose-phosphate pyrophosphokinase from Caldanaerobacter subterraneus subsp. tengcongensis (strain DSM 15242 / JCM 11007 / NBRC 100824 / MB4) (Thermoanaerobacter tengcongensis).